The primary structure comprises 157 residues: Root allergen protein (157 aa).

The protein belongs to the BetVI family.

This chain is Root allergen protein, found in Taraxacum officinale (Common dandelion).